An 86-amino-acid polypeptide reads, in one-letter code: Large ribosomal subunit protein uL23 (86 aa).

It belongs to the universal ribosomal protein uL23 family. In terms of assembly, part of the 50S ribosomal subunit. Contacts protein L29.

Functionally, binds to 23S rRNA. One of the proteins that surrounds the polypeptide exit tunnel on the outside of the ribosome. The chain is Large ribosomal subunit protein uL23 from Pyrococcus furiosus (strain ATCC 43587 / DSM 3638 / JCM 8422 / Vc1).